Consider the following 239-residue polypeptide: Small ribosomal subunit protein uS2 (239 aa).

This sequence belongs to the universal ribosomal protein uS2 family.

This chain is Small ribosomal subunit protein uS2, found in Francisella philomiragia subsp. philomiragia (strain ATCC 25017 / CCUG 19701 / FSC 153 / O#319-036).